A 352-amino-acid chain; its full sequence is Speedy protein E16 (352 aa).

The disordered stretch occupies residues 1 to 90 (MDRTETRFRK…EPEKELAPEP (90 aa)). Positions 18–40 (ITTSRQPHPQNEQSPQRSTSGYS) are enriched in polar residues. Residues 76–90 (DESEEEPEKELAPEP) are compositionally biased toward acidic residues.

Belongs to the Speedy/Ringo family.

The polypeptide is Speedy protein E16 (Homo sapiens (Human)).